The chain runs to 117 residues: Small ribosomal subunit protein uS8c (117 aa).

Belongs to the universal ribosomal protein uS8 family. As to quaternary structure, part of the 30S ribosomal subunit.

The protein localises to the plastid. The protein resides in the chloroplast. In terms of biological role, one of the primary rRNA binding proteins, it binds directly to 16S rRNA central domain where it helps coordinate assembly of the platform of the 30S subunit. The protein is Small ribosomal subunit protein uS8c (rps8) of Cyanidioschyzon merolae (strain NIES-3377 / 10D) (Unicellular red alga).